The following is a 357-amino-acid chain: Isopentenyl-diphosphate delta-isomerase (357 aa).

Residue 12-13 (RK) participates in substrate binding. FMN-binding positions include Ser-70, 71 to 73 (SMT), Ser-101, and Asn-130. 101–103 (SMR) is a binding site for substrate. Gln-165 provides a ligand contact to substrate. Glu-166 serves as a coordination point for Mg(2+). FMN contacts are provided by residues Lys-197, 289-291 (GIR), and 310-311 (AQ).

This sequence belongs to the IPP isomerase type 2 family. As to quaternary structure, homooctamer. Dimer of tetramers. The cofactor is FMN. NADPH serves as cofactor. Mg(2+) is required as a cofactor.

It localises to the cytoplasm. It catalyses the reaction isopentenyl diphosphate = dimethylallyl diphosphate. Involved in the biosynthesis of isoprenoids. Catalyzes the 1,3-allylic rearrangement of the homoallylic substrate isopentenyl (IPP) to its allylic isomer, dimethylallyl diphosphate (DMAPP). The polypeptide is Isopentenyl-diphosphate delta-isomerase (Chlorobaculum parvum (strain DSM 263 / NCIMB 8327) (Chlorobium vibrioforme subsp. thiosulfatophilum)).